A 377-amino-acid chain; its full sequence is F-box protein At1g11810 (377 aa).

The region spanning 2–48 (TTTMSTLPVVLVDEILARVPITSLRSLRSTCKKWEASSKTNLVGGKA) is the F-box domain.

In Arabidopsis thaliana (Mouse-ear cress), this protein is F-box protein At1g11810.